Reading from the N-terminus, the 1399-residue chain is DNA-directed RNA polymerase subunit beta' (1399 aa).

The Zn(2+) site is built by cysteine 70, cysteine 72, cysteine 85, and cysteine 88. Mg(2+)-binding residues include aspartate 460, aspartate 462, and aspartate 464. Zn(2+)-binding residues include cysteine 814, cysteine 888, cysteine 895, and cysteine 898.

The protein belongs to the RNA polymerase beta' chain family. The RNAP catalytic core consists of 2 alpha, 1 beta, 1 beta' and 1 omega subunit. When a sigma factor is associated with the core the holoenzyme is formed, which can initiate transcription. Requires Mg(2+) as cofactor. It depends on Zn(2+) as a cofactor.

The catalysed reaction is RNA(n) + a ribonucleoside 5'-triphosphate = RNA(n+1) + diphosphate. Functionally, DNA-dependent RNA polymerase catalyzes the transcription of DNA into RNA using the four ribonucleoside triphosphates as substrates. This Pseudomonas fluorescens (strain SBW25) protein is DNA-directed RNA polymerase subunit beta'.